The chain runs to 3038 residues: Lovastatin nonaketide synthase, polyketide synthase component (3038 aa).

One can recognise a Ketosynthase family 3 (KS3) domain in the interval 8–447; it reads NEPIVVVGSG…GTNAHAIIEE (440 aa). Residues cysteine 181, histidine 320, and histidine 367 each act as for beta-ketoacyl synthase activity in the active site. A malonyl-CoA:ACP transacylase (MAT) domain region spans residues 562 to 889; it reads IFTGQGAQWP…GKNDLDSFSR (328 aa). The For malonyltransferase activity role is filled by serine 656. Residues 695 to 757 are lovC-binding; that stretch reads AMLAAGMSFE…DESTFARLLK (63 aa). The interval 953 to 1089 is N-terminal hotdog fold; that stretch reads HLLLGKLSEY…GQLALTIEDV (137 aa). Residues 953–1263 are dehydratase (DH) domain; the sequence is HLLLGKLSEY…ENITFKPFSP (311 aa). Residues 953 to 1267 enclose the PKS/mFAS DH domain; the sequence is HLLLGKLSEY…FKPFSPPDAS (315 aa). The Proton acceptor; for dehydratase activity role is filled by histidine 985. The segment at 1107 to 1267 is C-terminal hotdog fold; that stretch reads EEHPHMNRVN…FKPFSPPDAS (161 aa). Aspartate 1174 (proton donor; for dehydratase activity) is an active-site residue. The methyltransferase (CMet) domain stretch occupies residues 1443–1543; the sequence is LEIGAGTGGA…ARSLLKPGGQ (101 aa). The ketoreductase (KR) domain stretch occupies residues 2139-2437; that stretch reads TLPTRVRSID…KIPEYRGAKA (299 aa). The Carrier domain maps to 2463-2538; it reads QIVIDGLSAK…DLANEAAARL (76 aa). Position 2498 is an O-(pantetheine 4'-phosphoryl)serine (serine 2498). Positions 2546-2602 are disordered; that stretch reads VAATDGGAESTDNTSENEVSGREDTDLSAAATITEPSSADEDDTEPGDEDVPRSHHP. Positions 2583 to 2594 are enriched in acidic residues; the sequence is SADEDDTEPGDE. Residues 2602 to 2952 form an inactive Condensation domain region; that stretch reads PLSLGQEYSW…PTSNQPAPLF (351 aa).

In terms of assembly, homodimer. Each MAT domain from the lovB homodimer binds one lovC molecule to form the final active lovB-lovC megasynthase complex. It depends on pantetheine 4'-phosphate as a cofactor.

It carries out the reaction holo-[lovastatin nonaketide synthase] + 9 malonyl-CoA + S-adenosyl-L-methionine + 11 NADPH + 19 H(+) = dihydromonacolin L-[lovastatin nonaketide synthase] + S-adenosyl-L-homocysteine + 9 CO2 + 11 NADP(+) + 9 CoA + 6 H2O. The protein operates within polyketide biosynthesis; lovastatin biosynthesis. Functionally, lovastatin nonaketide synthase; part of the gene cluster that mediates the biosynthesis of lovastatin (also known as mevinolin, mevacor or monacolin K), a hypolipidemic inhibitor of (3S)-hydroxymethylglutaryl-coenzyme A (HMG-CoA) reductase (HMGR). The first step in the biosynthesis of lovastatin is the production of dihydromonacolin L acid by the lovastatin nonaketide synthase lovB and the trans-acting enoyl reductase lovC (called the lovB-lovC megasynthase complex) via condensation of one acetyl-CoA unit and 8 malonyl-CoA units. The formation of the LovB/C complex is essential for the integrity of the catalytic chamber to the complete total synthesis of DML acid. Dihydromonacolin L acid is released from lovB by the thioesterase lovG. Next, dihydromonacolin L acid is oxidized by the dihydromonacolin L monooxygenase lovA twice to form monacolin J acid. The 2-methylbutyrate moiety of lovastatin is synthesized by the lovastatin diketide synthase lovF via condensation of one acetyl-CoA unit and one malonyl-CoA unit. Finally, the covalent attachment of this moiety to monacolin J acid is catalyzed by the transesterase lovD to yield lovastatin. LovD has broad substrate specificity and can also convert monacolin J to simvastatin using alpha-dimethylbutanoyl-S-methyl-3-mercaptopropionate (DMB-S-MMP) as the thioester acyl donor, and can also catalyze the reverse reaction and function as hydrolase in vitro. LovD has much higher activity with LovF-bound 2-methylbutanoate than with free diketide substrates. The chain is Lovastatin nonaketide synthase, polyketide synthase component from Aspergillus terreus.